The following is a 62-amino-acid chain: Photosystem II reaction center protein Z (62 aa).

2 helical membrane passes run 8 to 28 and 41 to 61; these read LVLL…VVLA and YTGA…NSLV.

This sequence belongs to the PsbZ family. As to quaternary structure, PSII is composed of 1 copy each of membrane proteins PsbA, PsbB, PsbC, PsbD, PsbE, PsbF, PsbH, PsbI, PsbJ, PsbK, PsbL, PsbM, PsbT, PsbX, PsbY, PsbZ, Psb30/Ycf12, at least 3 peripheral proteins of the oxygen-evolving complex and a large number of cofactors. It forms dimeric complexes.

The protein localises to the plastid. It localises to the chloroplast thylakoid membrane. In terms of biological role, may control the interaction of photosystem II (PSII) cores with the light-harvesting antenna, regulates electron flow through the 2 photosystem reaction centers. PSII is a light-driven water plastoquinone oxidoreductase, using light energy to abstract electrons from H(2)O, generating a proton gradient subsequently used for ATP formation. In Porphyra purpurea (Red seaweed), this protein is Photosystem II reaction center protein Z.